We begin with the raw amino-acid sequence, 100 residues long: Urease subunit gamma (100 aa).

Belongs to the urease gamma subunit family. In terms of assembly, heterotrimer of UreA (gamma), UreB (beta) and UreC (alpha) subunits. Three heterotrimers associate to form the active enzyme.

Its subcellular location is the cytoplasm. The catalysed reaction is urea + 2 H2O + H(+) = hydrogencarbonate + 2 NH4(+). Its pathway is nitrogen metabolism; urea degradation; CO(2) and NH(3) from urea (urease route): step 1/1. In Ruegeria sp. (strain TM1040) (Silicibacter sp.), this protein is Urease subunit gamma.